The primary structure comprises 157 residues: Thioredoxin 2 (157 aa).

An N-terminal signal peptide occupies residues 1–23 (MKKYIFFFLFSFINFFFVYDVTC). The Thioredoxin domain occupies 46 to 157 (LRMFKKVPRL…DLIALIKKHL (112 aa)). Catalysis depends on nucleophile residues Cys82 and Cys85. A disulfide bridge connects residues Cys82 and Cys85.

This sequence belongs to the thioredoxin family. As to quaternary structure, monomer. Component of the Plasmodium translocon of exported proteins (PTEX) complex composed of HSP101, EXP2, PTEX150, PTEX88 and TRX2. Post-translationally, the disulfide bond between Cys-82 and Cys-85 acts as a redox-active center and is reduced by thioredoxin reductase TRXR.

It localises to the parasitophorous vacuole membrane. In terms of biological role, participates in various redox reactions through the reversible oxidation of its active center dithiol to a disulfide and catalyzes dithiol-disulfide exchange reactions. As part of the translocon PTEX complex, plays a role in the export of parasite proteins into the host erythrocyte. The translocon PTEX complex is a multi-protein machinery resident in the parasite parasitophorous vacuolar membrane, responsible for protein secretion into host cells. May contribute to the unfolding of proteins containing the PEXEL localization motif before their passage through the translocon or regulate the PTEX complex function. The sequence is that of Thioredoxin 2 from Plasmodium falciparum (isolate 3D7).